The chain runs to 225 residues: Uracil-DNA glycosylase (225 aa).

Asp65 functions as the Proton acceptor in the catalytic mechanism.

It belongs to the uracil-DNA glycosylase (UDG) superfamily. UNG family.

It localises to the cytoplasm. The catalysed reaction is Hydrolyzes single-stranded DNA or mismatched double-stranded DNA and polynucleotides, releasing free uracil.. In terms of biological role, excises uracil residues from the DNA which can arise as a result of misincorporation of dUMP residues by DNA polymerase or due to deamination of cytosine. This Clostridium perfringens (strain ATCC 13124 / DSM 756 / JCM 1290 / NCIMB 6125 / NCTC 8237 / Type A) protein is Uracil-DNA glycosylase.